The primary structure comprises 65 residues: Large ribosomal subunit protein bL35 (65 aa).

The protein belongs to the bacterial ribosomal protein bL35 family.

This is Large ribosomal subunit protein bL35 from Magnetococcus marinus (strain ATCC BAA-1437 / JCM 17883 / MC-1).